Reading from the N-terminus, the 121-residue chain is Chorion class A proteins Ld9 (121 aa).

It belongs to the chorion protein family.

In terms of biological role, this protein is one of many from the eggshell of the gypsy moth. The polypeptide is Chorion class A proteins Ld9 (Lymantria dispar (Gypsy moth)).